A 118-amino-acid polypeptide reads, in one-letter code: MTKNIHDVAYELQKAIAENDDFKTLKESYAAVQADAASKNLFDEFRTMQLSLQQKMMQGQEITEEDNQQAQEVVARIQQDAKITKLMETEQRLNVVIGDVNKIIMKPLEELYSAQQQA.

The protein belongs to the UPF0342 family.

This Bacillus cereus (strain ATCC 10987 / NRS 248) protein is UPF0342 protein BCE_0953.